A 257-amino-acid polypeptide reads, in one-letter code: tRNA pseudouridine synthase C (257 aa).

D54 is a catalytic residue.

Belongs to the pseudouridine synthase RluA family.

It carries out the reaction uridine(65) in tRNA = pseudouridine(65) in tRNA. In terms of biological role, responsible for synthesis of pseudouridine from uracil-65 in transfer RNAs. This chain is tRNA pseudouridine synthase C (truC), found in Yersinia pestis.